Consider the following 360-residue polypeptide: Peptide chain release factor 1 (360 aa).

Glutamine 235 carries the N5-methylglutamine modification. Over residues 284–293 the composition is skewed to basic and acidic residues; sequence QKRQQEEAST. Positions 284 to 305 are disordered; the sequence is QKRQQEEASTRRNLLGSGDRSD.

It belongs to the prokaryotic/mitochondrial release factor family. Methylated by PrmC. Methylation increases the termination efficiency of RF1.

The protein resides in the cytoplasm. In terms of biological role, peptide chain release factor 1 directs the termination of translation in response to the peptide chain termination codons UAG and UAA. The chain is Peptide chain release factor 1 from Pectobacterium carotovorum subsp. carotovorum (strain PC1).